A 188-amino-acid polypeptide reads, in one-letter code: Mitochondrial import receptor subunit TOM20 homolog (188 aa).

At 1–12 (MSDTILGFNKSN) the chain is on the mitochondrial intermembrane side. The chain crosses the membrane as a helical span at residues 13 to 31 (VVLAAGIAGAAFLGYCIYF). Residues 32–188 (DHKRINAPDY…ELIDDTDDLE (157 aa)) are Cytoplasmic-facing. Disordered stretches follow at residues 42–73 (KDKI…AAPD) and 156–188 (DEAE…DDLE). Positions 58 to 67 (MAPRRPAAAG) are enriched in low complexity.

It belongs to the Tom20 family. As to quaternary structure, forms part of the preprotein translocase complex of the outer mitochondrial membrane (TOM complex).

The protein resides in the mitochondrion outer membrane. In terms of biological role, central component of the receptor complex responsible for the recognition and translocation of cytosolically synthesized mitochondrial preproteins. Together with tomm-22 functions as the transit peptide receptor at the surface of the mitochondrion outer membrane and facilitates the movement of preproteins into the translocation pore. This Caenorhabditis elegans protein is Mitochondrial import receptor subunit TOM20 homolog.